A 266-amino-acid chain; its full sequence is Putative carbamate hydrolase RutD (266 aa).

This sequence belongs to the AB hydrolase superfamily. Hydrolase RutD family.

The enzyme catalyses carbamate + 2 H(+) = NH4(+) + CO2. Its function is as follows. Involved in pyrimidine catabolism. May facilitate the hydrolysis of carbamate, a reaction that can also occur spontaneously. The polypeptide is Putative carbamate hydrolase RutD (Escherichia coli O127:H6 (strain E2348/69 / EPEC)).